A 397-amino-acid chain; its full sequence is MAKQKFERTKPHVNIGTIGHIDHGKTTLTAAITKVLHDAHPDLNPFTPFDQIDKAPEEKARGITISIAHVEYQTDARHYAHVDCPGHADYIKNMITGAAQMDGAILVVSATDGPMPQTKEHVLLARQVGVPYIVVALNKADMVDDEEILELVELEVRELLNTYEFPGDDVPVIRVSALKALEGDKEWGEKLLELMAAVDASIPEPERDIDRPFLMPIEDVFTITGRGTVVTGRIERGIVKVNETVEIVGIKPETTTTTVTGVEMFRKLLDEGQAGDNVGLLLRGIKREDVERGQVIVKPKSITPHTVFEARVYILNKDEGGRHTPFFKNYRPQFYFRTTDVTGVVTLPEGTEMVMPGDNTEMTVELIQPIAMEEGLRFAIREGGRTVGAGQVLKVIK.

Residues 10 to 206 (KPHVNIGTIG…AVDASIPEPE (197 aa)) form the tr-type G domain. The tract at residues 19 to 26 (GHIDHGKT) is G1. 19-26 (GHIDHGKT) lines the GTP pocket. Threonine 26 contributes to the Mg(2+) binding site. The interval 62–66 (GITIS) is G2. The G3 stretch occupies residues 83-86 (DCPG). Residues 83–87 (DCPGH) and 138–141 (NKAD) each bind GTP. The G4 stretch occupies residues 138 to 141 (NKAD). The interval 176-178 (SAL) is G5.

Belongs to the TRAFAC class translation factor GTPase superfamily. Classic translation factor GTPase family. EF-Tu/EF-1A subfamily. As to quaternary structure, monomer.

Its subcellular location is the cytoplasm. It carries out the reaction GTP + H2O = GDP + phosphate + H(+). Functionally, GTP hydrolase that promotes the GTP-dependent binding of aminoacyl-tRNA to the A-site of ribosomes during protein biosynthesis. This chain is Elongation factor Tu, found in Parafrankia sp. (strain EAN1pec).